A 132-amino-acid chain; its full sequence is Histone H2B.2 (132 aa).

Residues 1–19 are compositionally biased toward basic and acidic residues; it reads MAPKAEKKPASKAPAEKKP. Residues 1–39 are disordered; sequence MAPKAEKKPASKAPAEKKPAAKKTSSSVDPSKKRTKARK. An N6-acetyllysine; alternate mark is found at K7 and K8. Residues K7 and K8 each participate in a glycyl lysine isopeptide (Lys-Gly) (interchain with G-Cter in SUMO); alternate cross-link. S11 carries the post-translational modification Phosphoserine. Position 12 is an N6-acetyllysine (K12). An N6-acetyllysine; alternate modification is found at K17. Residue K17 forms a Glycyl lysine isopeptide (Lys-Gly) (interchain with G-Cter in SUMO); alternate linkage. Residue K18 forms a Glycyl lysine isopeptide (Lys-Gly) (interchain with G-Cter in SUMO) linkage. K125 is covalently cross-linked (Glycyl lysine isopeptide (Lys-Gly) (interchain with G-Cter in ubiquitin)).

It belongs to the histone H2B family. The nucleosome is a histone octamer containing two molecules each of H2A, H2B, H3 and H4 assembled in one H3-H4 heterotetramer and two H2A-H2B heterodimers. The octamer wraps approximately 147 bp of DNA. Post-translationally, monoubiquitinated by the UBC2-BRE1 complex to form H2BK123ub1. H2BK123ub1 gives a specific tag for epigenetic transcriptional activation and is also prerequisite for H3K4me and H3K79me formation. H2BK123ub1 also modulates the formation of double-strand breaks during meiosis and is a prerequisite for DNA-damage checkpoint activation. Phosphorylated by STE20 to form H2BS10ph during progression through meiotic prophase. May be correlated with chromosome condensation. In terms of processing, acetylated by GCN5 to form H2BK11ac and H2BK16ac. H2BK16ac can also be formed by ESA1. Acetylation of N-terminal lysines and particularly formation of H2BK11acK16ac has a positive effect on transcription. Post-translationally, sumoylation to form H2BK6su or H2BK7su, and probably also H2BK16su or H2BK17su, occurs preferentially near the telomeres and represses gene transcription.

The protein resides in the nucleus. It localises to the chromosome. Functionally, core component of nucleosome. Nucleosomes wrap and compact DNA into chromatin, limiting DNA accessibility to the cellular machineries which require DNA as a template. Histones thereby play a central role in transcription regulation, DNA repair, DNA replication and chromosomal stability. DNA accessibility is regulated via a complex set of post-translational modifications of histones, also called histone code, and nucleosome remodeling. This chain is Histone H2B.2 (HTB1), found in Kluyveromyces lactis (strain ATCC 8585 / CBS 2359 / DSM 70799 / NBRC 1267 / NRRL Y-1140 / WM37) (Yeast).